The sequence spans 93 residues: YcgL domain-containing protein Spea_2443 (93 aa).

The 85-residue stretch at 1-85 folds into the YcgL domain; that stretch reads MICAVYKSLR…PVVNLLEQHK (85 aa).

This Shewanella pealeana (strain ATCC 700345 / ANG-SQ1) protein is YcgL domain-containing protein Spea_2443.